We begin with the raw amino-acid sequence, 249 residues long: 2,3-bisphosphoglycerate-dependent phosphoglycerate mutase (249 aa).

Residues R9–N16, T22–G23, R61, E88–Y91, K99, R115–R116, and G184–N185 contribute to the substrate site. The active-site Tele-phosphohistidine intermediate is the H10. E88 serves as the catalytic Proton donor/acceptor.

Belongs to the phosphoglycerate mutase family. BPG-dependent PGAM subfamily. Homodimer.

The enzyme catalyses (2R)-2-phosphoglycerate = (2R)-3-phosphoglycerate. It functions in the pathway carbohydrate degradation; glycolysis; pyruvate from D-glyceraldehyde 3-phosphate: step 3/5. In terms of biological role, catalyzes the interconversion of 2-phosphoglycerate and 3-phosphoglycerate. The chain is 2,3-bisphosphoglycerate-dependent phosphoglycerate mutase from Xylella fastidiosa (strain M23).